The primary structure comprises 124 residues: Small ribosomal subunit protein uS12 (124 aa).

The interval 1–30 (MPTIQQLVRKGRRDKVAKVKTAALKGSPQR) is disordered. Asp89 carries the post-translational modification 3-methylthioaspartic acid. The interval 105 to 124 (QGVKNRKQARSRYGAKKEKS) is disordered. The span at 108 to 118 (KNRKQARSRYG) shows a compositional bias: basic residues.

Belongs to the universal ribosomal protein uS12 family. As to quaternary structure, part of the 30S ribosomal subunit. Contacts proteins S8 and S17. May interact with IF1 in the 30S initiation complex.

In terms of biological role, with S4 and S5 plays an important role in translational accuracy. Interacts with and stabilizes bases of the 16S rRNA that are involved in tRNA selection in the A site and with the mRNA backbone. Located at the interface of the 30S and 50S subunits, it traverses the body of the 30S subunit contacting proteins on the other side and probably holding the rRNA structure together. The combined cluster of proteins S8, S12 and S17 appears to hold together the shoulder and platform of the 30S subunit. This is Small ribosomal subunit protein uS12 from Mycobacterium intracellulare.